Here is a 243-residue protein sequence, read N- to C-terminus: Ubiquinone/menaquinone biosynthesis C-methyltransferase UbiE (243 aa).

Residues T69, D90, and D116–A117 contribute to the S-adenosyl-L-methionine site.

The protein belongs to the class I-like SAM-binding methyltransferase superfamily. MenG/UbiE family.

The enzyme catalyses a 2-demethylmenaquinol + S-adenosyl-L-methionine = a menaquinol + S-adenosyl-L-homocysteine + H(+). The catalysed reaction is a 2-methoxy-6-(all-trans-polyprenyl)benzene-1,4-diol + S-adenosyl-L-methionine = a 5-methoxy-2-methyl-3-(all-trans-polyprenyl)benzene-1,4-diol + S-adenosyl-L-homocysteine + H(+). It functions in the pathway quinol/quinone metabolism; menaquinone biosynthesis; menaquinol from 1,4-dihydroxy-2-naphthoate: step 2/2. It participates in cofactor biosynthesis; ubiquinone biosynthesis. In terms of biological role, methyltransferase required for the conversion of demethylmenaquinol (DMKH2) to menaquinol (MKH2) and the conversion of 2-polyprenyl-6-methoxy-1,4-benzoquinol (DDMQH2) to 2-polyprenyl-3-methyl-6-methoxy-1,4-benzoquinol (DMQH2). In Cupriavidus metallidurans (strain ATCC 43123 / DSM 2839 / NBRC 102507 / CH34) (Ralstonia metallidurans), this protein is Ubiquinone/menaquinone biosynthesis C-methyltransferase UbiE.